The sequence spans 350 residues: Decarboxylase iboD (350 aa).

The protein belongs to the phosphatidylserine decarboxylase family.

It participates in secondary metabolite biosynthesis. Decarboxylase; part of the gene cluster that mediates the biosynthesis of the psychoactive metabolites ibotenic acid and muscimol. The first committed step is glutamate hydroxylation by the 2-oxoglutarate-dependent dioxygenase iboH, and the last step is decarboxylation of ibotenic acid to muscimol by the decarboxylase iboD. The order of the intermediate reactions is somewhat ambiguous. IboA likely activates the carboxylic acid at position 5 to introduce an amide bond, and the flavin monooxygenase iboF generates the N-O bond. There are several options for the latter step. One option is that iboF directly hydroxylates the amide nitrogen formed by iboA to produce a hydroxamic acid species. Another option is that iboF hydroxylates an external N-containing compound, whose resulting N-O bond is subsequently introduced into the hydroxyglutamate scaffold. The paralogous PLP-dependent cystathionine gamma-synthase-like enzymes iboG1 and iboG2 are likely involved in substitution of the OH group at position 3 by the O-N moiety. The first cyclic intermediate is most probably tricholomic acid which is likely desaturated to ibotenic acid by the cytochrome P450 monooxygenase iboC. The sequence is that of Decarboxylase iboD from Amanita muscaria (strain Koide BX008).